The chain runs to 444 residues: Phosphoglucosamine mutase (444 aa).

S103 functions as the Phosphoserine intermediate in the catalytic mechanism. Mg(2+) contacts are provided by S103, D242, D244, and D246. S103 carries the phosphoserine modification.

Belongs to the phosphohexose mutase family. Mg(2+) serves as cofactor. In terms of processing, activated by phosphorylation.

The enzyme catalyses alpha-D-glucosamine 1-phosphate = D-glucosamine 6-phosphate. In terms of biological role, catalyzes the conversion of glucosamine-6-phosphate to glucosamine-1-phosphate. This Hydrogenovibrio crunogenus (strain DSM 25203 / XCL-2) (Thiomicrospira crunogena) protein is Phosphoglucosamine mutase.